A 206-amino-acid chain; its full sequence is Sclerostin domain-containing protein 1 (206 aa).

An N-terminal signal peptide occupies residues 1-23 (MLPPAIHFYLLPLACILMKSCLA). N-linked (GlcNAc...) asparagine glycosylation occurs at asparagine 47. 4 disulfide bridges follow: cysteine 75–cysteine 133, cysteine 89–cysteine 147, cysteine 100–cysteine 163, and cysteine 104–cysteine 165. The 96-residue stretch at 75-170 (CRELRSTKYI…TACKCKRYTR (96 aa)) folds into the CTCK domain. Asparagine 173 carries N-linked (GlcNAc...) asparagine glycosylation. The interval 174-206 (ESSHNFESMSPAKPVQHHRERKRASKSSKHSMS) is disordered. Positions 188 to 206 (VQHHRERKRASKSSKHSMS) are enriched in basic residues.

The protein belongs to the sclerostin family. In terms of assembly, interacts with BMP2, BMP4, BMP6 and BMP7 with high affinity. Highly expressed in kidney and weakly in lung.

The protein localises to the secreted. Its function is as follows. May be involved in the onset of endometrial receptivity for implantation/sensitization for the decidual cell reaction Enhances Wnt signaling and inhibits TGF-beta signaling. Directly antagonizes activity of BMP2, BMP4, BMP6 and BMP7 in a dose-dependent manner. This is Sclerostin domain-containing protein 1 (SOSTDC1) from Homo sapiens (Human).